Reading from the N-terminus, the 82-residue chain is Small ribosomal subunit protein bS16 (82 aa).

The protein belongs to the bacterial ribosomal protein bS16 family.

The polypeptide is Small ribosomal subunit protein bS16 (Edwardsiella ictaluri (strain 93-146)).